The primary structure comprises 144 residues: Large ribosomal subunit protein uL15 (144 aa).

The segment covering Met-1–Ser-12 has biased composition (polar residues). The tract at residues Met-1 to Glu-51 is disordered. The span at Arg-21–Ala-31 shows a compositional bias: gly residues.

The protein belongs to the universal ribosomal protein uL15 family. In terms of assembly, part of the 50S ribosomal subunit.

Binds to the 23S rRNA. The sequence is that of Large ribosomal subunit protein uL15 from Buchnera aphidicola subsp. Schizaphis graminum (strain Sg).